The following is a 99-amino-acid chain: PE family protein PE13 (99 aa).

Residues 1-93 (MSFVMAYPEM…ASSYAATEVA (93 aa)) form the PE domain.

It belongs to the mycobacterial PE family.

The protein resides in the secreted. The protein localises to the cell wall. May play a pivotal role in the interaction between M.tuberculosis and host. Can enhance the survival within macrophages under stress conditions such as H(2)O(2), SDS and low pH. Increases the production of IL-6 and IL-1beta from macrophages, and decreases the secretion of suppressor of cytokine signaling 3 (SOCS-3). These changes probably involve the p38-ERK-NF-kappa-B signaling pathway. Also precipitates the macrophage death. This Mycobacterium tuberculosis (strain ATCC 25618 / H37Rv) protein is PE family protein PE13.